A 363-amino-acid chain; its full sequence is Carbamoyl phosphate synthase small chain (363 aa).

Positions 1–172 (MKAFLVLDNG…TKYIFGTHTG (172 aa)) are CPSase. The L-glutamine site is built by serine 45, glycine 224, and glycine 226. In terms of domain architecture, Glutamine amidotransferase type-1 spans 176–362 (KLAVYDYGVK…YDLVETTKRG (187 aa)). The active-site Nucleophile is cysteine 252. Leucine 253, glutamine 256, asparagine 294, glycine 296, and phenylalanine 297 together coordinate L-glutamine. Residues histidine 335 and glutamate 337 contribute to the active site.

It belongs to the CarA family. As to quaternary structure, composed of two chains; the small (or glutamine) chain promotes the hydrolysis of glutamine to ammonia, which is used by the large (or ammonia) chain to synthesize carbamoyl phosphate. Tetramer of heterodimers (alpha,beta)4.

It carries out the reaction hydrogencarbonate + L-glutamine + 2 ATP + H2O = carbamoyl phosphate + L-glutamate + 2 ADP + phosphate + 2 H(+). The catalysed reaction is L-glutamine + H2O = L-glutamate + NH4(+). Its pathway is amino-acid biosynthesis; L-arginine biosynthesis; carbamoyl phosphate from bicarbonate: step 1/1. It participates in pyrimidine metabolism; UMP biosynthesis via de novo pathway; (S)-dihydroorotate from bicarbonate: step 1/3. Small subunit of the glutamine-dependent carbamoyl phosphate synthetase (CPSase). CPSase catalyzes the formation of carbamoyl phosphate from the ammonia moiety of glutamine, carbonate, and phosphate donated by ATP, constituting the first step of 2 biosynthetic pathways, one leading to arginine and/or urea and the other to pyrimidine nucleotides. The small subunit (glutamine amidotransferase) binds and cleaves glutamine to supply the large subunit with the substrate ammonia. In Leptospira borgpetersenii serovar Hardjo-bovis (strain L550), this protein is Carbamoyl phosphate synthase small chain.